Consider the following 75-residue polypeptide: Putative antitoxin PH1062.1 (75 aa).

Belongs to the UPF0330 family.

Functionally, possibly the antitoxin component of a type II toxin-antitoxin (TA) system. The sequence is that of Putative antitoxin PH1062.1 from Pyrococcus horikoshii (strain ATCC 700860 / DSM 12428 / JCM 9974 / NBRC 100139 / OT-3).